Consider the following 278-residue polypeptide: 1-acyl-sn-glycerol-3-phosphate acyltransferase beta (278 aa).

The first 23 residues, 1 to 23, serve as a signal peptide directing secretion; sequence MDPWPWLTAALLLLLLLVQLSRT. Over 24 to 29 the chain is Lumenal; it reads ARFYAK. A helical membrane pass occupies residues 30–50; that stretch reads VGLYCVLCLSFSAAASIVCLL. At 51–121 the chain is on the cytoplasmic side; that stretch reads RHGGRTVDNM…PKRCVQIAKR (71 aa). Positions 98–103 match the HXXXXD motif motif; it reads HQSILD. A helical membrane pass occupies residues 122–142; the sequence is ELMFTGPVGLIMYLGGVYFIN. The Lumenal portion of the chain corresponds to 143–278; sequence RQQARTAMSV…IKEPGVLPAQ (136 aa). The EGTR motif motif lies at 172–175; it reads EGTR.

It belongs to the 1-acyl-sn-glycerol-3-phosphate acyltransferase family. As to expression, expressed at high levels in the liver, at intermediate levels in the kidney, gut, heart and skeletal muscles. Undetectable in brain and spleen.

It is found in the endoplasmic reticulum membrane. The catalysed reaction is a 1-acyl-sn-glycero-3-phosphate + an acyl-CoA = a 1,2-diacyl-sn-glycero-3-phosphate + CoA. It catalyses the reaction 1-(9Z-octadecenoyl)-sn-glycero-3-phosphate + (9Z)-octadecenoyl-CoA = 1,2-di-(9Z-octadecenoyl)-sn-glycero-3-phosphate + CoA. It carries out the reaction 1-(9Z-octadecenoyl)-sn-glycero-3-phosphate + hexadecanoyl-CoA = 1-(9Z)-octadecenoyl-2-hexadecanoyl-sn-glycero-3-phosphate + CoA. The enzyme catalyses heptadecanoyl-CoA + 1-(9Z-octadecenoyl)-sn-glycero-3-phosphate = 1-(9Z)-octadecenoyl-2-heptadecanoyl-sn-glycero-3-phosphate + CoA. The catalysed reaction is 1-(9Z-octadecenoyl)-sn-glycero-3-phosphate + (9Z,12Z)-octadecadienoyl-CoA = 1-(9Z)-octadecenoyl-2-(9Z,12Z)-octadecadienoyl-sn-glycero-3-phosphate + CoA. It catalyses the reaction 1-(9Z-octadecenoyl)-sn-glycero-3-phosphate + tetradecanoyl-CoA = 1-(9Z)-octadecenoyl-2-tetradecanoyl-sn-glycero-3-phosphate + CoA. It carries out the reaction pentadecanoyl-CoA + 1-(9Z-octadecenoyl)-sn-glycero-3-phosphate = 1-(9Z)-octadecenoyl-2-pentadecanoyl-sn-glycero-3-phosphate + CoA. The enzyme catalyses 1-hexadecanoyl-sn-glycero-3-phosphate + (9Z)-octadecenoyl-CoA = 1-hexadecanoyl-2-(9Z-octadecenoyl)-sn-glycero-3-phosphate + CoA. The catalysed reaction is 1-tetradecanoyl-sn-glycerol 3-phosphate + (9Z)-octadecenoyl-CoA = 1-tetradecanoyl-2-(9Z)-octadecenoyl-sn-glycero-3-phosphate + CoA. It catalyses the reaction 1-(9Z,12Z,15Z)-octadecatrienoyl-sn-glycero-3-phosphate + (9Z)-octadecenoyl-CoA = 1-(9Z,12Z,15Z)-octadecatrienoyl-2-(9Z)-octadecenoyl-sn-glycero-3-phosphate + CoA. It carries out the reaction 1-(6Z,9Z,12Z-octadecatrienoyl)-sn-glycero-3-phosphate + (9Z)-octadecenoyl-CoA = (6Z,9Z,12Z)-octadecatrienoyl-2-(9Z)-octadecenoyl-sn-glycero-3-phosphate + CoA. The enzyme catalyses 1-eicosanoyl-sn-glycero-3-phosphate + (9Z)-octadecenoyl-CoA = 1-eicosanoyl-2-(9Z)-octadecenoyl-sn-glycero-3-phosphate + CoA. The catalysed reaction is 1-hexadecanoyl-sn-glycero-3-phosphate + octadecanoyl-CoA = 1-hexadecanoyl-2-octadecanoyl-sn-glycero-3-phosphate + CoA. It catalyses the reaction 1-hexadecanoyl-sn-glycero-3-phosphate + (5Z,8Z,11Z,14Z)-eicosatetraenoyl-CoA = 1-hexadecanoyl-2-(5Z,8Z,11Z,14Z-eicosatetraenoyl)-sn-glycero-3-phosphate + CoA. It carries out the reaction 1-hexadecanoyl-sn-glycero-3-phosphate + hexadecanoyl-CoA = 1,2-dihexadecanoyl-sn-glycero-3-phosphate + CoA. The enzyme catalyses 1-hexadecanoyl-sn-glycero-3-phosphate + tetradecanoyl-CoA = 1-hexadecanoyl-2-tetradecanoyl-sn-glycero-3-phosphate + CoA. The catalysed reaction is (11Z)-octadecenoyl-CoA + 1-(9Z-octadecenoyl)-sn-glycero-3-phosphate = 1-(9Z)-octadecenoyl-2-(11Z)-octadecenoyl-sn-glycero-3-phosphate + CoA. It functions in the pathway phospholipid metabolism; CDP-diacylglycerol biosynthesis; CDP-diacylglycerol from sn-glycerol 3-phosphate: step 2/3. Its function is as follows. Converts 1-acyl-sn-glycerol-3-phosphate (lysophosphatidic acid or LPA) into 1,2-diacyl-sn-glycerol-3-phosphate (phosphatidic acid or PA) by incorporating an acyl moiety at the sn-2 position of the glycerol backbone. This Mus musculus (Mouse) protein is 1-acyl-sn-glycerol-3-phosphate acyltransferase beta (Agpat2).